A 433-amino-acid chain; its full sequence is Small ribosomal subunit biogenesis GTPase RsgA 1, mitochondrial (433 aa).

The tract at residues 1 to 20 (MLRAKHIGKNYSSSLSPVLS) is disordered. Residues 113 to 291 (SEILDPPVAN…LADTPGFNQP (179 aa)) enclose the CP-type G domain. 212-220 (GPSGVGKSS) lines the GTP pocket. Zn(2+) is bound by residues cysteine 317, cysteine 322, histidine 324, and cysteine 330.

The protein belongs to the TRAFAC class YlqF/YawG GTPase family. RsgA subfamily. In terms of assembly, monomer. Associates with 30S ribosomal subunit, binds 16S rRNA. Zn(2+) is required as a cofactor.

It localises to the mitochondrion. Functionally, one of several proteins that assist in the late maturation steps of the functional core of the 30S ribosomal subunit. Helps release RbfA from mature subunits. May play a role in the assembly of ribosomal proteins into the subunit. Circularly permuted GTPase that catalyzes slow GTP hydrolysis, GTPase activity is stimulated by the 30S ribosomal subunit. Required for embryo development. This is Small ribosomal subunit biogenesis GTPase RsgA 1, mitochondrial from Arabidopsis thaliana (Mouse-ear cress).